The primary structure comprises 154 residues: Large ribosomal subunit protein uL13 (154 aa).

Belongs to the universal ribosomal protein uL13 family. As to quaternary structure, part of the 50S ribosomal subunit.

This protein is one of the early assembly proteins of the 50S ribosomal subunit, although it is not seen to bind rRNA by itself. It is important during the early stages of 50S assembly. The protein is Large ribosomal subunit protein uL13 of Bartonella henselae (strain ATCC 49882 / DSM 28221 / CCUG 30454 / Houston 1) (Rochalimaea henselae).